Consider the following 280-residue polypeptide: Energy-coupling factor transporter ATP-binding protein EcfA2 (280 aa).

The region spanning 3 to 245 (INLQNVSYTY…VSLLEKKQLG (243 aa)) is the ABC transporter domain. 40 to 47 (GHTGSGKS) serves as a coordination point for ATP.

The protein belongs to the ABC transporter superfamily. Energy-coupling factor EcfA family. As to quaternary structure, forms a stable energy-coupling factor (ECF) transporter complex composed of 2 membrane-embedded substrate-binding proteins (S component), 2 ATP-binding proteins (A component) and 2 transmembrane proteins (T component).

Its subcellular location is the cell membrane. In terms of biological role, ATP-binding (A) component of a common energy-coupling factor (ECF) ABC-transporter complex. Unlike classic ABC transporters this ECF transporter provides the energy necessary to transport a number of different substrates. The chain is Energy-coupling factor transporter ATP-binding protein EcfA2 from Streptococcus pyogenes serotype M28 (strain MGAS6180).